We begin with the raw amino-acid sequence, 128 residues long: Nanos homolog 1 (128 aa).

Positions 7–23 are essential for its translational repressor activity; it reads FDSWSDYLGLSSLISRG. The interval 23 to 56 is disordered; the sequence is GLQPRGEGENPSPRWNVSCPAPAEPLPSKEPEGR. The Nanos-type zinc finger occupies 60 to 114; sequence GCGFCRSNKEAMSLYSSHRLRSLDGRVLCPVLRGYTCPLCGANGDWAHTMRYCPL. Zn(2+)-binding residues include Cys61, Cys64, His77, Cys88, Cys96, Cys99, His107, and Cys112. 2 short sequence motifs (C2HC) span residues 61-88 and 96-112; these read CGFC…RVLC and CPLC…MRYC.

The protein belongs to the nanos family. In terms of assembly, interacts with ccnb1.

Its subcellular location is the cytoplasm. The protein localises to the perinuclear region. Acts as a translational repressor. Can mediate repression affecting different steps in the translation process: cap-driven, IRES-driven, polyadenylated RNAs or nonpolyadenylated RNAs. Essential for the development of primordial germ cells (PGCs) by ensuring their proper migration and survival. The protein is Nanos homolog 1 (nanos1) of Xenopus borealis (Kenyan clawed frog).